The sequence spans 525 residues: Vesicular inhibitory amino acid transporter (525 aa).

Residues 1–132 (MATLLRSKLS…WNVTNAIQGM (132 aa)) are Cytoplasmic-facing. Residues 69–111 (PCGDEGAEPPVEGDIHYQRGSGAPLPPSGSKDQVGAGGEFGGH) are disordered. Residues 133-153 (FVLGLPYAILHGGYLGLFLII) form a helical membrane-spanning segment. At 154–204 (FAAVVCCYTGKILIACLYEENEDGEVVRVRDSYVAIANACCAPRFPTLGGR) the chain is on the lumenal, vesicle side. The residue at position 186 (tyrosine 186) is a 3'-nitrotyrosine. The chain crosses the membrane as a helical span at residues 205–225 (VVNVAQIIELVMTCILYVVVS). The Cytoplasmic segment spans residues 226–265 (GNLMYNSFPGLPVSQKSWSIIATAVLLPCAFLKNLKAVSK). A helical membrane pass occupies residues 266–286 (FSLLCTLAHFVINILVIAYCL). Over 287–305 (SRARDWAWEKVKFYIDVKK) the chain is Lumenal, vesicle. The helical transmembrane segment at 306 to 326 (FPISIGIIVFSYTSQIFLPSL) threads the bilayer. The Cytoplasmic segment spans residues 327–341 (EGNMQQPSEFHCMMN). The chain crosses the membrane as a helical span at residues 342–362 (WTHIAACVLKGLFALVAYLTW). The Lumenal, vesicle portion of the chain corresponds to 363–383 (ADETKEVITDNLPGSIRAVVN). Residues 384–404 (IFLVAKALLSYPLPFFAAVEV) traverse the membrane as a helical segment. Over 405 to 438 (LEKSLFQEGSRAFFPACYGGDGRLKSWGLTLRCA) the chain is Cytoplasmic. The helical transmembrane segment at 439–459 (LVVFTLLMAIYVPHFALLMGL) threads the bilayer. The Lumenal, vesicle portion of the chain corresponds to 460-461 (TG). The chain crosses the membrane as a helical span at residues 462–482 (SLTGAGLCFLLPSLFHLRLLW). Over 483-489 (RKLLWHQ) the chain is Cytoplasmic. The chain crosses the membrane as a helical span at residues 490–510 (VFFDVAIFVIGGICSVSGFVH). At 511 to 525 (SLEGLIEAYRTNAED) the chain is on the lumenal, vesicle side.

This sequence belongs to the amino acid/polyamine transporter 2 family.

The protein localises to the cytoplasmic vesicle membrane. Its subcellular location is the presynapse. The enzyme catalyses 4-aminobutanoate(out) + n H(+)(in) = 4-aminobutanoate(in) + n H(+)(out). It catalyses the reaction glycine(out) + n H(+)(in) = glycine(in) + n H(+)(out). It carries out the reaction beta-alanine(out) + n H(+)(in) = beta-alanine(in) + n H(+)(out). Its function is as follows. Antiporter that exchanges vesicular protons for cytosolic 4-aminobutanoate or to a lesser extend glycine, thus allowing their secretion from nerve terminals. The transport is equally dependent on the chemical and electrical components of the proton gradient. May also transport beta-alanine. Acidification of GABAergic synaptic vesicles is a prerequisite for 4-aminobutanoate uptake. In Macaca fascicularis (Crab-eating macaque), this protein is Vesicular inhibitory amino acid transporter.